The primary structure comprises 460 residues: Argininosuccinate lyase (460 aa).

It belongs to the lyase 1 family. Argininosuccinate lyase subfamily.

It localises to the cytoplasm. The catalysed reaction is 2-(N(omega)-L-arginino)succinate = fumarate + L-arginine. Its pathway is amino-acid biosynthesis; L-arginine biosynthesis; L-arginine from L-ornithine and carbamoyl phosphate: step 3/3. This is Argininosuccinate lyase from Pelotomaculum thermopropionicum (strain DSM 13744 / JCM 10971 / SI).